An 829-amino-acid polypeptide reads, in one-letter code: FAST kinase domain-containing protein 1, mitochondrial (829 aa).

An N6-acetyllysine modification is found at lysine 346. In terms of domain architecture, RAP spans isoleucine 761–glutamate 821.

The protein belongs to the FAST kinase family. In terms of tissue distribution, expression detected in spleen, testis, colon, heart, smooth muscle, kidney, brain, lung, liver, brown and white adipose tissue with highest expression in heart and brown adipose tissue.

The protein resides in the mitochondrion. Its function is as follows. Involved in the down-regulation of mitochondrial MT-ND3 mRNA levels which leads to decreased respiratory complex I abundance and activity. The polypeptide is FAST kinase domain-containing protein 1, mitochondrial (Fastkd1) (Mus musculus (Mouse)).